Reading from the N-terminus, the 232-residue chain is YlmG homolog protein 1-1, chloroplastic (232 aa).

Residues 1–16 (MAAITALTLRSPVYLP) constitute a chloroplast transit peptide. The next 2 membrane-spanning stretches (helical) occupy residues 147-167 (LTVV…VLMV) and 201-221 (IIPP…AVLG).

Belongs to the YggT family.

The protein localises to the plastid. The protein resides in the chloroplast thylakoid membrane. Its function is as follows. Required for the proper distribution of nucleoids in chloroplasts. The nucleoid partitioning by YLMG1-1 may be related to chloroplast division processes. The sequence is that of YlmG homolog protein 1-1, chloroplastic from Arabidopsis thaliana (Mouse-ear cress).